The chain runs to 875 residues: Neurotrypsin (875 aa).

The N-terminal stretch at 1-20 (MTLARFVLALMLGALPEVVG) is a signal peptide. Residue Asn26 is glycosylated (N-linked (GlcNAc...) asparagine). Residues 29-88 (LHHSHRHSPPAGPHYPYYLPTQQRPPRTRPPPPLPRFPRPPRALPAQRPHALQAGHTPRP) form a disordered region. The span at 56–71 (TRPPPPLPRFPRPPRA) shows a compositional bias: pro residues. One can recognise a Kringle domain in the interval 93–165 (CPAGEPWVSV…GKVDWGYCDC (73 aa)). Disulfide bonds link Cys93-Cys165, Cys109-Cys149, Cys138-Cys163, Cys195-Cys259, Cys208-Cys269, Cys239-Cys249, Cys305-Cys369, Cys318-Cys379, Cys349-Cys359, Cys412-Cys475, Cys425-Cys485, Cys455-Cys465, Cys525-Cys589, Cys538-Cys599, Cys569-Cys579, Cys619-Cys750, Cys661-Cys677, Cys765-Cys831, Cys794-Cys808, and Cys821-Cys850. SRCR domains follow at residues 170-271 (VRLR…TCSF), 280-381 (IRLA…SCTP), 387-487 (IRLA…ACYP), and 500-601 (VRLM…ICDY). The tract at residues 619-630 (CGLRLLHRRQKR) is zymogen activation region. One can recognise a Peptidase S1 domain in the interval 631–874 (IIGGKNSLRG…FVPWIKSVTK (244 aa)). The active-site Charge relay system is His676. Asn683 carries an N-linked (GlcNAc...) asparagine glycan. Catalysis depends on Asp726, which acts as the Charge relay system. Catalysis depends on Ser825, which acts as the Charge relay system.

This sequence belongs to the peptidase S1 family. In terms of tissue distribution, brain and Leydig cells of the testis.

It localises to the secreted. Functionally, plays a role in neuronal plasticity and the proteolytic action may subserve structural reorganizations associated with learning and memory operations. This chain is Neurotrypsin (PRSS12), found in Homo sapiens (Human).